The chain runs to 508 residues: Bestrophin-2 (508 aa).

Residues 1–31 (MTVTYTARVANARFGGFSQLLLLWRGSIYKL) lie on the Cytoplasmic side of the membrane. Alanine 10 is a binding site for Ca(2+). Residues 32–51 (LWRELLCFLGLYMALSAAYR) form a helical membrane-spanning segment. The Extracellular portion of the chain corresponds to 52-60 (FLLAEEQKR). The chain crosses the membrane as a helical span at residues 61-82 (YFEKLVIYCDQYASLIPVSFVL). At 83-238 (GFYVTLVVHR…WISIPLVYTQ (156 aa)) the chain is on the cytoplasmic side. The helical transmembrane segment at 239–255 (VVTIAVYSYFLACLIGR) threads the bilayer. The Extracellular segment spans residues 256-274 (QFLDPAQGYKDHTLDLCVP). A helical membrane pass occupies residues 275–288 (IFTLLQFFFYAGWL). Residues 289–508 (KVAEQLINPF…PIGEEEESPA (220 aa)) lie on the Cytoplasmic side of the membrane. Positions 293, 296, 301, and 304 each coordinate Ca(2+). The segment at 455-508 (LREPELEPPACPEPPAPIPGPTPEPFTTVSIPGPRAPAPPWLPSPIGEEEESPA) is disordered. 2 stretches are compositionally biased toward pro residues: residues 461 to 478 (EPPACPEPPAPIPGPTPE) and 488 to 497 (PRAPAPPWLP).

This sequence belongs to the anion channel-forming bestrophin (TC 1.A.46) family. Calcium-sensitive chloride channel subfamily. Pentamer. Interacts with GLUL; this interaction tethers a fraction of GLUL to the membrane, causing a decrease of cytosolic glutamine synthase (GS) activity and inhibits the chloride channel activity of BEST2 by affecting the gating at the aperture in the absence of intracellular glutamate. Expressed in mucin-secreting colonic goblet cells.

The protein localises to the cell membrane. The protein resides in the basolateral cell membrane. The catalysed reaction is chloride(in) = chloride(out). The enzyme catalyses hydrogencarbonate(in) = hydrogencarbonate(out). It catalyses the reaction L-glutamate(out) = L-glutamate(in). It carries out the reaction iodide(out) = iodide(in). The catalysed reaction is L-glutamine(out) = L-glutamine(in). With respect to regulation, chloride channel activity is allosterically inhibited by GLUL/glutamine synthase (GS) which affects the gating at the aperture in the absence of intracellular glutamate. Inhibitory effect of GLUL is relieved upon increasing of intracellular level of L-glutamate. Functionally, ligand-gated anion channel that allows the movement of anions across cell membranes when activated by calcium (Ca2+). Transports a large specter of anions, namely mediates the movement of chloride, L-glutamate and iodide. Calcium-binding triggers the dilation of the aperture, but calcium-dependent gating is only effective when the size of the passing anion is bigger than the closed aperture. Mediates the calcium-activated hydrogencarbonate movement and participates in colonic hydrogencarbonate secretion concomitant with mucin secretion. In non-pigmented epithelium (NPE), mediates the efflux of intracellular L-glutamate; binding of intracellular L-glutamate activates and open both the neck and the aperture of the channel, leading to L-glutamate exit promoting chloride influx movement from the extracellular side in trans. Also exhibits a directional permeability for intracellular glutamine, in a similar manner as for L-glutamate. This is Bestrophin-2 from Mus musculus (Mouse).